The primary structure comprises 297 residues: F-actin-capping protein subunit beta (297 aa).

The segment covering 276 to 289 (DLSGKESDDKRQSE) has biased composition (basic and acidic residues). The interval 276-297 (DLSGKESDDKRQSELVKGLQSL) is disordered.

This sequence belongs to the F-actin-capping protein beta subunit family. Component of the F-actin capping complex, composed of a heterodimer of an alpha and a beta subunit.

Its subcellular location is the cytoplasm. The protein resides in the cytoskeleton. The protein localises to the actin patch. F-actin-capping proteins bind in a Ca(2+)-independent manner to the fast growing ends of actin filaments (barbed end) thereby blocking the exchange of subunits at these ends. Unlike other capping proteins (such as gelsolin and severin), these proteins do not sever actin filaments. The chain is F-actin-capping protein subunit beta (CAP2) from Debaryomyces hansenii (strain ATCC 36239 / CBS 767 / BCRC 21394 / JCM 1990 / NBRC 0083 / IGC 2968) (Yeast).